Reading from the N-terminus, the 262-residue chain is Small ribosomal subunit protein uS2 (262 aa).

A disordered region spans residues 228 to 262; that stretch reads VSNEEVAAEQNINLDDKEESEQAETTEENTSVESN. Over residues 243-254 the composition is skewed to acidic residues; sequence DKEESEQAETTE.

The protein belongs to the universal ribosomal protein uS2 family.

This chain is Small ribosomal subunit protein uS2, found in Staphylococcus epidermidis (strain ATCC 35984 / DSM 28319 / BCRC 17069 / CCUG 31568 / BM 3577 / RP62A).